The chain runs to 143 residues: Phospholipase A2 isozymes PA3A/PA3B/PA5 (143 aa).

Positions 10, 12, and 14 each coordinate Ca(2+). Intrachain disulfides connect Cys-11–Cys-33, Cys-32–Cys-72, and Cys-39–Cys-65. His-36 is an active-site residue. Position 37 (Asp-37) interacts with Ca(2+).

Belongs to the phospholipase A2 family. Group III subfamily. Ca(2+) is required as a cofactor. In terms of tissue distribution, expressed by the venom gland.

The protein resides in the secreted. It catalyses the reaction a 1,2-diacyl-sn-glycero-3-phosphocholine + H2O = a 1-acyl-sn-glycero-3-phosphocholine + a fatty acid + H(+). In terms of biological role, PLA2 catalyzes the calcium-dependent hydrolysis of the 2-acyl groups in 3-sn-phosphoglycerides. This chain is Phospholipase A2 isozymes PA3A/PA3B/PA5, found in Heloderma suspectum (Gila monster).